A 201-amino-acid chain; its full sequence is Small ribosomal subunit protein uS4c (201 aa).

Residues 20–43 form a disordered region; that stretch reads GLTNKRPKSRNDPTNQSSSRKISQ. Residues 31 to 41 are compositionally biased toward polar residues; it reads DPTNQSSSRKI. The region spanning 89 to 157 is the S4 RNA-binding domain; sequence MRLDNIIFRL…IGKNLDLSQK (69 aa).

The protein belongs to the universal ribosomal protein uS4 family. Part of the 30S ribosomal subunit. Contacts protein S5. The interaction surface between S4 and S5 is involved in control of translational fidelity.

It is found in the plastid. The protein resides in the chloroplast. In terms of biological role, one of the primary rRNA binding proteins, it binds directly to 16S rRNA where it nucleates assembly of the body of the 30S subunit. With S5 and S12 plays an important role in translational accuracy. In Cycas taitungensis (Prince sago), this protein is Small ribosomal subunit protein uS4c (rps4).